The sequence spans 233 residues: Outer membrane protein MIP (233 aa).

Residues 1–20 (MKMKLVTAAVMGLAMSTAMA) form the signal peptide. Residues 144–233 (SDTVTVEYTG…IHLISVKKSS (90 aa)) form the PPIase FKBP-type domain.

It belongs to the FKBP-type PPIase family.

It is found in the cell outer membrane. It catalyses the reaction [protein]-peptidylproline (omega=180) = [protein]-peptidylproline (omega=0). With respect to regulation, strongly inhibited by FK506 but is completely resistant to cyclosporin A. In terms of biological role, essential virulence factor associated with macrophage infectivity. Exhibits PPIase activity. The protein is Outer membrane protein MIP (mip) of Legionella pneumophila subsp. pneumophila (strain Philadelphia 1 / ATCC 33152 / DSM 7513).